Here is a 145-residue protein sequence, read N- to C-terminus: Large ribosomal subunit protein uL13 (145 aa).

This sequence belongs to the universal ribosomal protein uL13 family. Part of the 50S ribosomal subunit.

Functionally, this protein is one of the early assembly proteins of the 50S ribosomal subunit, although it is not seen to bind rRNA by itself. It is important during the early stages of 50S assembly. This chain is Large ribosomal subunit protein uL13, found in Staphylococcus carnosus (strain TM300).